An 864-amino-acid polypeptide reads, in one-letter code: DNA mismatch repair protein MutS (864 aa).

607-614 (GPNMGGKS) provides a ligand contact to ATP.

It belongs to the DNA mismatch repair MutS family.

In terms of biological role, this protein is involved in the repair of mismatches in DNA. It is possible that it carries out the mismatch recognition step. This protein has a weak ATPase activity. This is DNA mismatch repair protein MutS from Neisseria gonorrhoeae (strain NCCP11945).